We begin with the raw amino-acid sequence, 119 residues long: Holo-[acyl-carrier-protein] synthase (119 aa).

Mg(2+) is bound by residues D5 and E51.

Belongs to the P-Pant transferase superfamily. AcpS family. The cofactor is Mg(2+).

The protein resides in the cytoplasm. The enzyme catalyses apo-[ACP] + CoA = holo-[ACP] + adenosine 3',5'-bisphosphate + H(+). Functionally, transfers the 4'-phosphopantetheine moiety from coenzyme A to a Ser of acyl-carrier-protein. This Helicobacter pylori (strain HPAG1) protein is Holo-[acyl-carrier-protein] synthase.